Consider the following 501-residue polypeptide: ATP synthase subunit alpha (501 aa).

169-176 is an ATP binding site; that stretch reads GDRQTGKT.

It belongs to the ATPase alpha/beta chains family. As to quaternary structure, F-type ATPases have 2 components, CF(1) - the catalytic core - and CF(0) - the membrane proton channel. CF(1) has five subunits: alpha(3), beta(3), gamma(1), delta(1), epsilon(1). CF(0) has three main subunits: a(1), b(2) and c(9-12). The alpha and beta chains form an alternating ring which encloses part of the gamma chain. CF(1) is attached to CF(0) by a central stalk formed by the gamma and epsilon chains, while a peripheral stalk is formed by the delta and b chains.

Its subcellular location is the cell membrane. It carries out the reaction ATP + H2O + 4 H(+)(in) = ADP + phosphate + 5 H(+)(out). Functionally, produces ATP from ADP in the presence of a proton gradient across the membrane. The alpha chain is a regulatory subunit. In Streptococcus mutans serotype c (strain ATCC 700610 / UA159), this protein is ATP synthase subunit alpha.